A 125-amino-acid polypeptide reads, in one-letter code: Small ribosomal subunit protein uS13 (125 aa).

The interval 95–125 (GLPVNGQRTRTNARTRKGGKKTVANKKKVTK) is disordered. The segment covering 105–125 (TNARTRKGGKKTVANKKKVTK) has biased composition (basic residues).

It belongs to the universal ribosomal protein uS13 family. In terms of assembly, part of the 30S ribosomal subunit. Forms a loose heterodimer with protein S19. Forms two bridges to the 50S subunit in the 70S ribosome.

Functionally, located at the top of the head of the 30S subunit, it contacts several helices of the 16S rRNA. In the 70S ribosome it contacts the 23S rRNA (bridge B1a) and protein L5 of the 50S subunit (bridge B1b), connecting the 2 subunits; these bridges are implicated in subunit movement. Contacts the tRNAs in the A and P-sites. The polypeptide is Small ribosomal subunit protein uS13 (Leptospira borgpetersenii serovar Hardjo-bovis (strain L550)).